Consider the following 526-residue polypeptide: NAD(P)H-quinone oxidoreductase chain 4 (526 aa).

13 helical membrane passes run 5–25, 32–52, 87–107, 111–131, 133–153, 165–185, 211–231, 239–259, 273–293, 302–320, 331–351, 371–393, and 414–434; these read FPWL…VPLI, WYSF…FFTS, LILL…PVTL, MFHF…AVQD, VLFF…LAIW, FILY…AMYF, FLGL…HTWL, TAPV…YALI, FAPL…LTSF, IAYS…VGSL, QMIS…ATYD, IFAM…GFVA, and LVVL…LSML.

It belongs to the complex I subunit 4 family.

The protein resides in the cell inner membrane. It catalyses the reaction a plastoquinone + NADH + (n+1) H(+)(in) = a plastoquinol + NAD(+) + n H(+)(out). The enzyme catalyses a plastoquinone + NADPH + (n+1) H(+)(in) = a plastoquinol + NADP(+) + n H(+)(out). Its function is as follows. NDH-1 shuttles electrons from NAD(P)H, via FMN and iron-sulfur (Fe-S) centers, to quinones in the respiratory chain. The immediate electron acceptor for the enzyme in this species is believed to be plastoquinone. Couples the redox reaction to proton translocation (for every two electrons transferred, four hydrogen ions are translocated across the cytoplasmic membrane), and thus conserves the redox energy in a proton gradient. This is NAD(P)H-quinone oxidoreductase chain 4 from Gloeobacter violaceus (strain ATCC 29082 / PCC 7421).